The chain runs to 837 residues: MELFPELKNIKVPTEKSRLWKDECCYCFDTPENGEGLFIDLIGLLAFSKKYVQLNHQKTHHHLYLNFKKVAIVNEKVKSPTIENGGEEKPPKKLAIGVEGGFNVEDEEIKYEEHYKLYIFPDDKFLELSDPIIPENVRVCCEKIKTLNSQSRKEEIVSWNAESVFPSAFAESIIQLDNNTKKIDPKGPWRCDIEGCDKVENLWLNLTDGFIGCGRKYADGTGGNGHAQEHFNQTQYPISVKLGTITKDHADVYSYPEDDMVSDPLLFQHLTHWGLNPNVMVKTEKSMAELELDQNLNFEFGKIQEKGKLLENVFGPGLTGIENLGNSCYMSSVIQMIFAIDSFQTRYLKDREASFKDITQDPTQSFEIQMSKLAHGLLSGDYSIPLSKPSKNANEESEAATQIGIAPKMFKSLIGASHAEFSTMKQQDAHEYLQYLLEYIERAEHSRPSWIQQANPTRLFQFHNEDRIECGSSGQVKYTRRLENILSVPVNLDDATNKQEVAQYEETLKQQNGVRQKDQEEIRPIIPLVSCINGFVEPYRVEDFLSPATGVKTFSLNSSRMATFPEVLIIHLKKYTYNADYTPKKLNVFMDVPDIIDIDSLRGRGIKEGEVPLKEGTINTTTKVPEPSFNQEVLDTLLSMDFPLVRCKKALLATGGKDAELAMNWIFEHTEDPDIDIEQTPVNNNNNNNNSSNSNDKLFVFNSQDVDNIIGMGFTDSQAKLALKNTKGNLERAADWLFSHIDNLDELVAKDNASTSSINPSLIPQSTTSLQPVSDGVGKYELLGFISHLGNNVTCGHYVCHIKKNNRWIKFNDRHVQLSEQPPKELGYIYFYKRQLN.

A UBP-type; degenerate zinc finger spans residues 166–277 (PSAFAESIIQ…QHLTHWGLNP (112 aa)). One can recognise a USP domain in the interval 319–835 (TGIENLGNSC…LGYIYFYKRQ (517 aa)). The active-site Nucleophile is Cys328. Residues 628–669 (SFNQEVLDTLLSMDFPLVRCKKALLATGGKDAELAMNWIFEH) enclose the UBA 1 domain. Positions 676-695 (DIEQTPVNNNNNNNNSSNSN) are disordered. Low complexity predominate over residues 683 to 695 (NNNNNNNNSSNSN). The UBA 2 domain maps to 700-740 (VFNSQDVDNIIGMGFTDSQAKLALKNTKGNLERAADWLFSH). His797 acts as the Proton acceptor in catalysis.

This sequence belongs to the peptidase C19 family.

The enzyme catalyses Thiol-dependent hydrolysis of ester, thioester, amide, peptide and isopeptide bonds formed by the C-terminal Gly of ubiquitin (a 76-residue protein attached to proteins as an intracellular targeting signal).. Required for development but not growth. This chain is Ubiquitin carboxyl-terminal hydrolase A (ubpA), found in Dictyostelium discoideum (Social amoeba).